The chain runs to 203 residues: Small ribosomal subunit protein uS4 (203 aa).

Positions 93–153 (RRFDNVVFRA…PKSKNMSAVS (61 aa)) constitute an S4 RNA-binding domain.

It belongs to the universal ribosomal protein uS4 family. Part of the 30S ribosomal subunit. Contacts protein S5. The interaction surface between S4 and S5 is involved in control of translational fidelity.

In terms of biological role, one of the primary rRNA binding proteins, it binds directly to 16S rRNA where it nucleates assembly of the body of the 30S subunit. Its function is as follows. With S5 and S12 plays an important role in translational accuracy. The chain is Small ribosomal subunit protein uS4 from Chlorobium phaeovibrioides (strain DSM 265 / 1930) (Prosthecochloris vibrioformis (strain DSM 265)).